A 327-amino-acid polypeptide reads, in one-letter code: L-lactate dehydrogenase (327 aa).

NAD(+) is bound by residues Val-18, Asp-39, Lys-44, Tyr-69, and 83 to 84; that span reads GA. Residues Gln-86, Arg-92, and 124–127 contribute to the substrate site; that span reads NPVD. NAD(+) contacts are provided by residues 122–124 and Ser-147; that span reads AAN. Substrate is bound at residue 152-155; that stretch reads DSAR. The beta-D-fructose 1,6-bisphosphate site is built by Arg-157 and His-172. The active-site Proton acceptor is His-179. The residue at position 224 (Tyr-224) is a Phosphotyrosine. Thr-233 is a substrate binding site.

It belongs to the LDH/MDH superfamily. LDH family. As to quaternary structure, homotetramer.

It localises to the cytoplasm. It carries out the reaction (S)-lactate + NAD(+) = pyruvate + NADH + H(+). Its pathway is fermentation; pyruvate fermentation to lactate; (S)-lactate from pyruvate: step 1/1. Its activity is regulated as follows. Allosterically activated by fructose 1,6-bisphosphate (FBP). Functionally, catalyzes the conversion of lactate to pyruvate. In Streptococcus uberis (strain ATCC BAA-854 / 0140J), this protein is L-lactate dehydrogenase.